We begin with the raw amino-acid sequence, 341 residues long: L-threonine 3-dehydrogenase (341 aa).

Position 38 (cysteine 38) interacts with Zn(2+). Catalysis depends on charge relay system residues threonine 40 and histidine 43. Histidine 63, glutamate 64, cysteine 93, cysteine 96, cysteine 99, and cysteine 107 together coordinate Zn(2+). Residues isoleucine 175, aspartate 195, arginine 200, 262–264, and 286–287 contribute to the NAD(+) site; these read LGI and IY.

Belongs to the zinc-containing alcohol dehydrogenase family. As to quaternary structure, homotetramer. The cofactor is Zn(2+).

It localises to the cytoplasm. It carries out the reaction L-threonine + NAD(+) = (2S)-2-amino-3-oxobutanoate + NADH + H(+). It functions in the pathway amino-acid degradation; L-threonine degradation via oxydo-reductase pathway; glycine from L-threonine: step 1/2. Its function is as follows. Catalyzes the NAD(+)-dependent oxidation of L-threonine to 2-amino-3-ketobutyrate. The chain is L-threonine 3-dehydrogenase from Shigella sonnei (strain Ss046).